A 191-amino-acid polypeptide reads, in one-letter code: MQIPRLIMHSVQGKIGLTTTPASLKMEQPQADLEIEQPSAEMEISVTPGKLTIDQTQAWEELDRKHVFKRIEEAAQQGHEDVMEGIARTAEEGDELMKIENKGNPIASQARRNSEMHQIQLGENYAPSLSRVKIQYTPSQLDVQITPRKPVIQAEPHKPIVEYTPGNVKVDMLQYPDLNIDVEYPKESPEK.

This is an uncharacterized protein from Bacillus subtilis (strain 168).